The following is a 1977-amino-acid chain: Voltage-dependent L-type calcium channel subunit alpha-1F (1977 aa).

Positions 1–11 (MSESEGGKDTT) are enriched in basic and acidic residues. A disordered region spans residues 1 to 60 (MSESEGGKDTTPEPSPANGAGPGPEWGLCPGPPAVEGESSGASGLGTPKRRNQHSKHKTV). At 1–92 (MSESEGGKDT…RSCISIVEWK (92 aa)) the chain is on the cytoplasmic side. Over residues 48–59 (PKRRNQHSKHKT) the composition is skewed to basic residues. The stretch at 79-375 (NPLRRSCISI…LVLGVLSGEF (297 aa)) is one I repeat. A helical membrane pass occupies residues 93–111 (PFDILILLTIFANCVALGV). At 112-129 (YIPFPEDDSNTANHNLEQ) the chain is on the extracellular side. The chain crosses the membrane as a helical span at residues 130–149 (VEYVFLVIFTVETVLKIVAY). Topologically, residues 150–161 (GLVLHPSAYIRN) are cytoplasmic. Residues 162–180 (GWNLLDFIIVVVGLFSVLL) form a helical membrane-spanning segment. At 181 to 201 (EQGPGRPGDAPHTGGKPGGFD) the chain is on the extracellular side. A helical membrane pass occupies residues 202–220 (VKALRAFRVLRPLRLVSGV). At 221 to 239 (PSLHIVLNSIMKALVPLLH) the chain is on the cytoplasmic side. Residues 240 to 259 (IALLVLFVIIIYAIIGLELF) traverse the membrane as a helical segment. At 260 to 347 (LGRMHKTCYF…WMQDAMGYEL (88 aa)) the chain is on the extracellular side. Asparagine 295 carries an N-linked (GlcNAc...) asparagine glycan. Glutamate 330 is a binding site for Ca(2+). Residues 348–372 (PWVYFVSLVIFGSFFVLNLVLGVLS) form a helical membrane-spanning segment. Residues 373–529 (GEFSKEREKA…ARCRRAVKSN (157 aa)) lie on the Cytoplasmic side of the membrane. The tract at residues 395–412 (QQMEEDLRGYLDWITQAE) is binding to the beta subunit. Disordered stretches follow at residues 418–441 (DPSA…PQLA) and 455–488 (SHST…EDEE). A compositionally biased stretch (low complexity) spans 455-469 (SHSTRSTHSTSSHAS). The II repeat unit spans residues 515-761 (NRVLRARCRR…VFLAIAVDNL (247 aa)). Residues 530–549 (ACYWAVLLLVFLNTLTIASE) traverse the membrane as a helical segment. Residues 550 to 564 (HHGQPVWLTQIQEYA) lie on the Extracellular side of the membrane. Residues 565–583 (NKVLLCLFTVEMLLKLYGL) traverse the membrane as a helical segment. Over 584–591 (GPSAYVSS) the chain is Cytoplasmic. Residues 592–610 (FFNRFDCFVVCGGILETTL) traverse the membrane as a helical segment. The Extracellular segment spans residues 611-620 (VEVGAMQPLG). A helical transmembrane segment spans residues 621 to 639 (ISVLRCVRLLRIFKVTRHW). At 640–658 (ASLSNLVASLLNSMKSIAS) the chain is on the cytoplasmic side. The chain crosses the membrane as a helical span at residues 659–679 (LLLLLFLFIIIFSLLGMQLFG). The Extracellular segment spans residues 680–733 (GKFNFDQTHTKRSTFDTFPQALLTVFQILTGEDWNVVMYDGIMAYGGPFFPGML). Glutamate 711 contributes to the Ca(2+) binding site. A helical membrane pass occupies residues 734 to 758 (VCIYFIILFICGNYILLNVFLAIAV). The Cytoplasmic segment spans residues 759-871 (DNLASGDAGT…KGCHTLIHHH (113 aa)). The disordered stretch occupies residues 767-830 (GTAKDKGGEK…EEEEEGAGGV (64 aa)). The segment covering 768–783 (TAKDKGGEKSNEKDLP) has biased composition (basic and acidic residues). Residues 807–826 (DMEEEEEEEEEEEEEEEEEG) show a composition bias toward acidic residues. The stretch at 858-1140 (NPLRKGCHTL…IFVGFVIITF (283 aa)) is one III repeat. Residues 872–890 (VFTNLILVFIILSSVSLAA) form a helical membrane-spanning segment. Topologically, residues 891 to 906 (EDPIRAHSFRNHILGY) are extracellular. The helical transmembrane segment at 907–926 (FDYAFTSIFTVEILLKMTVF) threads the bilayer. Topologically, residues 927–938 (GAFLHRGSFCRS) are cytoplasmic. The helical transmembrane segment at 939–957 (WFNMLDLLVVSVSLISFGI) threads the bilayer. The Extracellular segment spans residues 958–963 (HSSAIS). The chain crosses the membrane as a helical span at residues 964 to 983 (VVKILRVLRVLRPLRAINRA). Residues 984 to 1002 (KGLKHVVQCVFVAIRTIGN) are Cytoplasmic-facing. Residues 1003–1022 (IMIVTTLLQFMFACIGVQLF) traverse the membrane as a helical segment. At 1023-1112 (KGKFYTCTDE…HGPIYNYRVE (90 aa)) the chain is on the extracellular side. The segment at 1060–1150 (RLWVNSDFNF…RAQGEQEYQN (91 aa)) is dihydropyridine binding. Glutamate 1086 serves as a coordination point for Ca(2+). A helical membrane pass occupies residues 1113 to 1133 (ISVFFIVYIIIIAFFMMNIFV). The Cytoplasmic portion of the chain corresponds to 1134–1190 (GFVIITFRAQGEQEYQNCELDKNQRQCVEYALKAQPLRRYIPKNPHQYRVWATVNSA). Residues 1177 to 1444 (NPHQYRVWAT…LFVAVIMDNF (268 aa)) form an IV repeat. A helical transmembrane segment spans residues 1191-1209 (AFEYLMFLLILLNTVALAM). The Extracellular segment spans residues 1210–1224 (QHYEQTAPFNYAMDI). A helical membrane pass occupies residues 1225–1244 (LNMVFTGLFTIEMVLKIIAF). Topologically, residues 1245–1251 (KPKHYFT) are cytoplasmic. A helical membrane pass occupies residues 1252–1273 (DAWNTFDALIVVGSIVDIAVTE). Residues 1274–1290 (VNNGGHLGESSEDSSRI) lie on the Extracellular side of the membrane. Residues 1291–1310 (SITFFRLFRVMRLVKLLSKG) traverse the membrane as a helical segment. The Cytoplasmic segment spans residues 1311-1329 (EGIRTLLWTFIKSFQALPY). Residues 1330–1349 (VALLIAMIFFIYAVIGMQMF) traverse the membrane as a helical segment. At 1350-1416 (GKVALQDGTQ…GEEFTCGSNF (67 aa)) the chain is on the extracellular side. The segment at 1397–1463 (RCDPESDFGP…LGPHHLDEFK (67 aa)) is dihydropyridine binding. The phenylalkylamine binding stretch occupies residues 1409-1452 (EFTCGSNFAIAYFISFFMLCAFLIINLFVAVIMDNFDYLTRDWS). Residues 1417–1441 (AIAYFISFFMLCAFLIINLFVAVIM) form a helical membrane-spanning segment. The Cytoplasmic segment spans residues 1442–1977 (DNFDYLTRDW…GDEMACVHAL (536 aa)). Disordered stretches follow at residues 1637–1754 (CDTE…EVPD) and 1816–1841 (DLPI…WATP). A compositionally biased stretch (acidic residues) spans 1638–1657 (DTEEEEEEGQEGVEEEDEKD). Composition is skewed to polar residues over residues 1661–1670 (NKATMVSQPS), 1702–1716 (TPTS…AGSN), 1733–1743 (GNSQPKGTKGQ), and 1829–1840 (SGPNRAQGSWAT).

It belongs to the calcium channel alpha-1 subunit (TC 1.A.1.11) family. CACNA1F subfamily. In terms of assembly, voltage-dependent calcium channels are multisubunit complexes, consisting of alpha-1, alpha-2, beta and delta subunits in a 1:1:1:1 ratio. The channel activity is directed by the pore-forming and voltage-sensitive alpha-1 subunit. In many cases, this subunit is sufficient to generate voltage-sensitive calcium channel activity. The auxiliary subunits beta and alpha-2/delta linked by a disulfide bridge regulate the channel activity. Interacts (via IQ domain) with CABP4; in a calcium independent manner. As to quaternary structure, interacts with CABP4; suppresses robust calcium-dependent inactivation of channel without enhancing the hyperpolarized voltage-dependent activation. In terms of tissue distribution, expression in skeletal muscle and retina. Isoform 4 is expressed in retina.

It is found in the membrane. The enzyme catalyses Ca(2+)(in) = Ca(2+)(out). In terms of biological role, voltage-sensitive calcium channels (VSCC) mediate the entry of calcium ions into excitable cells and are also involved in a variety of calcium-dependent processes, including muscle contraction, hormone or neurotransmitter release, gene expression, cell motility, cell division and cell death. The isoform alpha-1F gives rise to L-type calcium currents. Long-lasting (L-type) calcium channels belong to the 'high-voltage activated' (HVA) group. They are blocked by dihydropyridines (DHP), phenylalkylamines, and by benzothiazepines. Activates at more negative voltages and does not undergo calcium-dependent inactivation (CDI), due to incoming calcium ions, during depolarization. Its function is as follows. Voltage-dependent L-type calcium channel activates at more hyperpolarized voltages and exhibits a robust calcium-dependent inactivation (CDI), due to incoming calcium ions, during depolarizations. Functionally, voltage-sensitive calcium channels (VSCC) mediate the entry of calcium ions into excitable cells and are also involved in a variety of calcium-dependent processes, including muscle contraction, hormone or neurotransmitter release, gene expression, cell motility, cell division and cell death. In Homo sapiens (Human), this protein is Voltage-dependent L-type calcium channel subunit alpha-1F.